The sequence spans 416 residues: Serine hydroxymethyltransferase (416 aa).

Residues L121 and 125-127 (GHL) contribute to the (6S)-5,6,7,8-tetrahydrofolate site. N6-(pyridoxal phosphate)lysine is present on K230.

It belongs to the SHMT family. As to quaternary structure, homodimer. Pyridoxal 5'-phosphate is required as a cofactor.

It is found in the cytoplasm. The enzyme catalyses (6R)-5,10-methylene-5,6,7,8-tetrahydrofolate + glycine + H2O = (6S)-5,6,7,8-tetrahydrofolate + L-serine. The protein operates within one-carbon metabolism; tetrahydrofolate interconversion. It participates in amino-acid biosynthesis; glycine biosynthesis; glycine from L-serine: step 1/1. In terms of biological role, catalyzes the reversible interconversion of serine and glycine with tetrahydrofolate (THF) serving as the one-carbon carrier. This reaction serves as the major source of one-carbon groups required for the biosynthesis of purines, thymidylate, methionine, and other important biomolecules. Also exhibits THF-independent aldolase activity toward beta-hydroxyamino acids, producing glycine and aldehydes, via a retro-aldol mechanism. The polypeptide is Serine hydroxymethyltransferase (Nitrosomonas eutropha (strain DSM 101675 / C91 / Nm57)).